The sequence spans 231 residues: Isoprenyl transferase (231 aa).

Asp-14 is a catalytic residue. Asp-14 contacts Mg(2+). Substrate is bound by residues Gly-15–Arg-18, Trp-19, Arg-27, His-31, and Ser-59–Glu-61. Asn-62 (proton acceptor) is an active-site residue. Residues Trp-63, Arg-65, Arg-176, and Arg-182–Ser-184 contribute to the substrate site. Glu-195 is a Mg(2+) binding site.

It belongs to the UPP synthase family. Homodimer. Mg(2+) serves as cofactor.

Its function is as follows. Catalyzes the condensation of isopentenyl diphosphate (IPP) with allylic pyrophosphates generating different type of terpenoids. The chain is Isoprenyl transferase from Aquifex pyrophilus.